The following is a 54-amino-acid chain: Large ribosomal subunit protein bL33 (54 aa).

Belongs to the bacterial ribosomal protein bL33 family.

This Thermobifida fusca (strain YX) protein is Large ribosomal subunit protein bL33.